A 59-amino-acid chain; its full sequence is Cortexin domain-containing 1 protein (59 aa).

The chain crosses the membrane as a helical span at residues 17–37 (LTLACFVFLCLFLVVMIIRCA).

Its subcellular location is the membrane. The polypeptide is Cortexin domain-containing 1 protein (Homo sapiens (Human)).